We begin with the raw amino-acid sequence, 569 residues long: Proline--tRNA ligase (569 aa).

Belongs to the class-II aminoacyl-tRNA synthetase family. ProS type 1 subfamily. Homodimer.

Its subcellular location is the cytoplasm. It catalyses the reaction tRNA(Pro) + L-proline + ATP = L-prolyl-tRNA(Pro) + AMP + diphosphate. Functionally, catalyzes the attachment of proline to tRNA(Pro) in a two-step reaction: proline is first activated by ATP to form Pro-AMP and then transferred to the acceptor end of tRNA(Pro). As ProRS can inadvertently accommodate and process non-cognate amino acids such as alanine and cysteine, to avoid such errors it has two additional distinct editing activities against alanine. One activity is designated as 'pretransfer' editing and involves the tRNA(Pro)-independent hydrolysis of activated Ala-AMP. The other activity is designated 'posttransfer' editing and involves deacylation of mischarged Ala-tRNA(Pro). The misacylated Cys-tRNA(Pro) is not edited by ProRS. The chain is Proline--tRNA ligase from Dehalococcoides mccartyi (strain ATCC BAA-2266 / KCTC 15142 / 195) (Dehalococcoides ethenogenes (strain 195)).